We begin with the raw amino-acid sequence, 131 residues long: D-ribose pyranase (131 aa).

The active-site Proton donor is His20. Residues Asp28, His98, and Phe120–Asn122 each bind substrate.

It belongs to the RbsD / FucU family. RbsD subfamily. In terms of assembly, homodecamer.

Its subcellular location is the cytoplasm. The catalysed reaction is beta-D-ribopyranose = beta-D-ribofuranose. Its pathway is carbohydrate metabolism; D-ribose degradation; D-ribose 5-phosphate from beta-D-ribopyranose: step 1/2. Catalyzes the interconversion of beta-pyran and beta-furan forms of D-ribose. The chain is D-ribose pyranase from Oenococcus oeni (strain ATCC BAA-331 / PSU-1).